Consider the following 76-residue polypeptide: Translation initiation factor IF-1 (76 aa).

The 76-residue stretch at M1–K76 folds into the S1-like domain.

The protein belongs to the IF-1 family. Component of the 30S ribosomal translation pre-initiation complex which assembles on the 30S ribosome in the order IF-2 and IF-3, IF-1 and N-formylmethionyl-tRNA(fMet); mRNA recruitment can occur at any time during PIC assembly.

Its subcellular location is the cytoplasm. Its function is as follows. One of the essential components for the initiation of protein synthesis. Stabilizes the binding of IF-2 and IF-3 on the 30S subunit to which N-formylmethionyl-tRNA(fMet) subsequently binds. Helps modulate mRNA selection, yielding the 30S pre-initiation complex (PIC). Upon addition of the 50S ribosomal subunit IF-1, IF-2 and IF-3 are released leaving the mature 70S translation initiation complex. The sequence is that of Translation initiation factor IF-1 from Renibacterium salmoninarum (strain ATCC 33209 / DSM 20767 / JCM 11484 / NBRC 15589 / NCIMB 2235).